A 270-amino-acid chain; its full sequence is 3-methyl-2-oxobutanoate hydroxymethyltransferase (270 aa).

Mg(2+) contacts are provided by Asp42 and Asp86. Residues 42–43, Asp86, and Lys116 each bind 3-methyl-2-oxobutanoate; that span reads DS. Glu118 serves as a coordination point for Mg(2+). Residue Glu185 is the Proton acceptor of the active site.

It belongs to the PanB family. Homodecamer; pentamer of dimers. Requires Mg(2+) as cofactor.

The protein resides in the cytoplasm. The enzyme catalyses 3-methyl-2-oxobutanoate + (6R)-5,10-methylene-5,6,7,8-tetrahydrofolate + H2O = 2-dehydropantoate + (6S)-5,6,7,8-tetrahydrofolate. It participates in cofactor biosynthesis; (R)-pantothenate biosynthesis; (R)-pantoate from 3-methyl-2-oxobutanoate: step 1/2. Its function is as follows. Catalyzes the reversible reaction in which hydroxymethyl group from 5,10-methylenetetrahydrofolate is transferred onto alpha-ketoisovalerate to form ketopantoate. This Synechococcus sp. (strain CC9902) protein is 3-methyl-2-oxobutanoate hydroxymethyltransferase.